Reading from the N-terminus, the 2335-residue chain is Serine/threonine-protein kinase tor1 (2335 aa).

HEAT repeat units lie at residues 1-31, 164-201, 331-371, 410-449, 474-512, 522-560, 562-596, 642-679, 684-722, 728-766, 843-880, 904-923, 924-961, 964-1003, and 1005-1042; these read MEYF…SSTK, LYIS…VVCQ, PYLQ…AVKL, PIQE…AREP, YSLI…RDPI, ESVA…RHLA, PDNI…YNPA, PYIQ…VEGE, DVRG…RSGY, LDYP…LDPY, VFLP…IIGP, LLVI…DEFK, FYLP…FGSN, EYMH…SVNF, and DHAS…QLGY. The FAT domain occupies 1226–1781; that stretch reads VISAHASKCN…VYSLTVSSKS (556 aa). In terms of domain architecture, PI3K/PI4K catalytic spans 1955-2269; sequence FHHTFEVISS…ARHADYAALS (315 aa). The tract at residues 1961 to 1967 is G-loop; it reads VISSKQR. The residue at position 1972 (threonine 1972) is a Phosphothreonine; by PKB/AKT1. The interval 2134–2142 is catalytic loop; it reads GLGDRHPSN. The tract at residues 2154 to 2179 is activation loop; the sequence is HIDFGDCFEVAMHREKFPEKIPFRLT. An FATC domain is found at 2303–2335; it reads EQLPVKAQVEKLIQQATAPENLCRCYVGWCSFW.

The protein belongs to the PI3/PI4-kinase family. The target of rapamycin complex 2 (TORC2) is composed of at least bit61, pop3/wat1, sin1, ste20 and tor1. Phosphorylation at Thr-1972 in the ATP-binding region by AKT1 strongly reduces kinase activity.

It localises to the cytoplasm. It catalyses the reaction L-seryl-[protein] + ATP = O-phospho-L-seryl-[protein] + ADP + H(+). The catalysed reaction is L-threonyl-[protein] + ATP = O-phospho-L-threonyl-[protein] + ADP + H(+). In terms of biological role, catalytic component of TORC2, which regulates multiple cellular processes to control cell growth in response to environmental signals. In response to signals, TORC2 phosphorylates AGC protein kinase family members. TORC2 is required for cell survival under various stress conditions. TORC2 positively controls G1 cell-cycle arrest, sexual development and amino acid uptake. Positively regulates amino acid uptake through the control of expression of amino acid permeases. Responsible for the phosphorylation of AGC kinase gad8 at 'Ser-527' and 'Ser-546', activating gad8 kinase activity and promoting sexual development. This is Serine/threonine-protein kinase tor1 from Schizosaccharomyces pombe (strain 972 / ATCC 24843) (Fission yeast).